The following is a 169-amino-acid chain: Small ribosomal subunit protein uS5c (169 aa).

The 64-residue stretch at 17–80 (WQERVVQIRR…ADGKKHVVEV (64 aa)) folds into the S5 DRBM domain.

The protein belongs to the universal ribosomal protein uS5 family. In terms of assembly, part of the 30S ribosomal subunit. Contacts protein S4.

It is found in the plastid. The protein localises to the cyanelle. Its function is as follows. With S4 and S12 plays an important role in translational accuracy. This is Small ribosomal subunit protein uS5c (rps5) from Cyanophora paradoxa.